Reading from the N-terminus, the 240-residue chain is Biosynthetic peptidoglycan transglycosylase (240 aa).

A helical membrane pass occupies residues 16–36; the sequence is VLMALLCLFLIYELAMFSMVV.

This sequence belongs to the glycosyltransferase 51 family.

It localises to the cell inner membrane. It catalyses the reaction [GlcNAc-(1-&gt;4)-Mur2Ac(oyl-L-Ala-gamma-D-Glu-L-Lys-D-Ala-D-Ala)](n)-di-trans,octa-cis-undecaprenyl diphosphate + beta-D-GlcNAc-(1-&gt;4)-Mur2Ac(oyl-L-Ala-gamma-D-Glu-L-Lys-D-Ala-D-Ala)-di-trans,octa-cis-undecaprenyl diphosphate = [GlcNAc-(1-&gt;4)-Mur2Ac(oyl-L-Ala-gamma-D-Glu-L-Lys-D-Ala-D-Ala)](n+1)-di-trans,octa-cis-undecaprenyl diphosphate + di-trans,octa-cis-undecaprenyl diphosphate + H(+). The protein operates within cell wall biogenesis; peptidoglycan biosynthesis. Its function is as follows. Peptidoglycan polymerase that catalyzes glycan chain elongation from lipid-linked precursors. The protein is Biosynthetic peptidoglycan transglycosylase of Bordetella avium (strain 197N).